A 548-amino-acid polypeptide reads, in one-letter code: Protein NRT1/ PTR FAMILY 2.4 (548 aa).

Transmembrane regions (helical) follow at residues 29–49, 65–85, 88–108, 136–156, 172–192, 200–220, 316–336, 354–374, 393–413, 429–449, 468–488, and 508–528; these read TLLG…VFLI, IVNG…DSFF, IPVI…LTLI, ILYA…FILA, FFNW…TAIV, WKLG…IFVA, LVPL…QMSM, VSAG…IILN, LQKV…SAVV, VLWL…HFPA, SLTS…IDVI, and YLVL…CSWF.

Belongs to the major facilitator superfamily. Proton-dependent oligopeptide transporter (POT/PTR) (TC 2.A.17) family. In terms of tissue distribution, strongly expressed in the root stele.

The protein resides in the membrane. Transporter involved in a passive nitrate efflux. The sequence is that of Protein NRT1/ PTR FAMILY 2.4 (NPF2.4) from Arabidopsis thaliana (Mouse-ear cress).